Reading from the N-terminus, the 317-residue chain is R-spondin-3 (317 aa).

The signal sequence occupies residues 1–20 (MQLQLISIVLILHFMEYTNC). FU repeat units follow at residues 34–86 (SGVS…GFYG), 92–135 (RNDC…GLVP), and 139–183 (KKEC…EFEP). 11 disulfides stabilise this stretch: cysteine 41/cysteine 48, cysteine 45/cysteine 54, cysteine 57/cysteine 76, cysteine 80/cysteine 95, cysteine 98/cysteine 105, cysteine 102/cysteine 111, cysteine 114/cysteine 125, cysteine 129/cysteine 189, cysteine 195/cysteine 237, cysteine 206/cysteine 213, and cysteine 246/cysteine 253. An N-linked (GlcNAc...) asparagine glycan is attached at asparagine 184. One can recognise a TSP type-1 domain in the interval 194–254 (HCEVSEWSEW…ECFVKKKRCK (61 aa)). Residues 251-268 (KRCKPPKGQRRGEKKKRF) are compositionally biased toward basic residues. A disordered region spans residues 251–317 (KRCKPPKGQR…RDQSRDAGTV (67 aa)). Residues 274-303 (VTAEARRERKREREKETIDREESENRNKTE) are compositionally biased toward basic and acidic residues. N-linked (GlcNAc...) asparagine glycosylation occurs at asparagine 300.

Belongs to the R-spondin family. As to quaternary structure, binds heparin.

Its subcellular location is the secreted. In terms of biological role, activator of the canonical Wnt signaling pathway by acting as a ligand for lgr4-6 receptors, which acts as a key regulator of angiogenesis. Upon binding to lgr4-6 (lgr4, lgr5 or lgr6), lgr4-6 associate with phosphorylated lrp6 and frizzled receptors that are activated by extracellular Wnt receptors, triggering the canonical Wnt signaling pathway to increase expression of target genes. Acts both in the canonical. Wnt/beta-catenin-dependent pathway and in non-canonical Wnt signaling pathway. Acts as a key regulator of angiogenesis by controlling vascular stability and pruning: acts by activating the non-canonical Wnt signaling pathway in endothelial cells. Can also amplify Wnt signaling pathway independently of LGR4-6 receptors, possibly by acting as a direct antagonistic ligand to RNF43 and ZNRF3. This chain is R-spondin-3 (rspo3), found in Danio rerio (Zebrafish).